The sequence spans 201 residues: 3-isopropylmalate dehydratase small subunit (201 aa).

Belongs to the LeuD family. LeuD type 1 subfamily. Heterodimer of LeuC and LeuD.

The catalysed reaction is (2R,3S)-3-isopropylmalate = (2S)-2-isopropylmalate. It participates in amino-acid biosynthesis; L-leucine biosynthesis; L-leucine from 3-methyl-2-oxobutanoate: step 2/4. Functionally, catalyzes the isomerization between 2-isopropylmalate and 3-isopropylmalate, via the formation of 2-isopropylmaleate. This Rhodopseudomonas palustris (strain HaA2) protein is 3-isopropylmalate dehydratase small subunit.